We begin with the raw amino-acid sequence, 312 residues long: Ubiquinone biosynthesis O-methyltransferase, mitochondrial (312 aa).

A mitochondrion-targeting transit peptide spans 1–32; it reads MLLRSRFLKVIHVRKQLSACSRFAIQTQTRCK. The S-adenosyl-L-methionine site is built by Arg68, Gly130, Asp153, and Met196. 3 residues coordinate Mg(2+): Glu197, Glu200, and His201.

The protein belongs to the class I-like SAM-binding methyltransferase superfamily. UbiG/COQ3 family. As to quaternary structure, component of a multi-subunit COQ enzyme complex, composed of at least COQ3, COQ4, COQ5, COQ6, COQ7 and COQ9. Interacts directly with COQ4. Requires Mg(2+) as cofactor.

It localises to the mitochondrion inner membrane. It carries out the reaction 3,4-dihydroxy-5-(all-trans-hexaprenyl)benzoate + S-adenosyl-L-methionine = 4-hydroxy-3-methoxy-5-(all-trans-hexaprenyl)benzoate + S-adenosyl-L-homocysteine + H(+). It catalyses the reaction a 3-demethylubiquinone + S-adenosyl-L-methionine = a ubiquinone + S-adenosyl-L-homocysteine. The catalysed reaction is 3-demethylubiquinol-6 + S-adenosyl-L-methionine = ubiquinol-6 + S-adenosyl-L-homocysteine + H(+). It functions in the pathway cofactor biosynthesis; ubiquinone biosynthesis. Its activity is regulated as follows. Regulated in response to catabolite repression. O-methyltransferase required for two non-consecutive steps during ubiquinone biosynthesis. Catalyzes the 2 O-methylation of 3,4-dihydroxy-5-(all-trans-hexaprenyl)benzoic acid into 4-hydroxy-3-methoxy-5-(all-trans-hexaprenyl)benzoic acid. Also catalyzes the last step of ubiquinone biosynthesis by mediating methylation of 3-demethylubiquinone into ubiquinone. Also able to mediate the methylation of 3-demethylubiquinol-6 into ubiquinol-6. This Saccharomyces cerevisiae (strain ATCC 204508 / S288c) (Baker's yeast) protein is Ubiquinone biosynthesis O-methyltransferase, mitochondrial.